Here is a 116-residue protein sequence, read N- to C-terminus: MDKKTSRLRRALRGRKKIQELGVNRLVVHRTPRHTYAQVISPDSQVLASASTAEKAVTEQLKYTGNVDAAKVVGKTVAERAIEKGVTVVAFDRSGFKYHGRVAALADAAREAGLKF.

This sequence belongs to the universal ribosomal protein uL18 family. As to quaternary structure, part of the 50S ribosomal subunit; part of the 5S rRNA/L5/L18/L25 subcomplex. Contacts the 5S and 23S rRNAs.

Functionally, this is one of the proteins that bind and probably mediate the attachment of the 5S RNA into the large ribosomal subunit, where it forms part of the central protuberance. The polypeptide is Large ribosomal subunit protein uL18 (Shewanella woodyi (strain ATCC 51908 / MS32)).